Here is a 482-residue protein sequence, read N- to C-terminus: Sensor histidine kinase CusS (482 aa).

The Cytoplasmic segment spans residues 1-15 (MVSKPFQRPFSLATR). The chain crosses the membrane as a helical span at residues 16–36 (LTFFISLATIAAFFAFAWIMI). Residues 37–186 (HSVKVHFAEQ…LHYINDLMNK (150 aa)) are Periplasmic-facing. Residues 187–207 (LIMTASVISILIVFIVLLAVH) traverse the membrane as a helical segment. In terms of domain architecture, HAMP spans 207–260 (HKGHAPIRSVSRQIQNITSKDLDVRLDPQTVPIELEQLVLSFNHMIERIEDVFT). The Cytoplasmic portion of the chain corresponds to 208–482 (KGHAPIRSVS…RFVIVLPERG (275 aa)). One can recognise a Histidine kinase domain in the interval 268 to 482 (DIAHEIRTPI…RFVIVLPERG (215 aa)). At histidine 271 the chain carries Phosphohistidine; by autocatalysis.

Autophosphorylated.

It is found in the cell inner membrane. It catalyses the reaction ATP + protein L-histidine = ADP + protein N-phospho-L-histidine.. Member of the two-component regulatory system CusS/CusR involved in response to copper and silver. Acts as a copper/silver ion sensor. Activates CusR by phosphorylation. In Escherichia coli O157:H7, this protein is Sensor histidine kinase CusS (cusS).